A 1499-amino-acid chain; its full sequence is DNA-directed RNA polymerase subunit beta' (1499 aa).

Positions 67, 69, 82, and 85 each coordinate Zn(2+). Positions 497, 499, and 501 each coordinate Mg(2+). Positions 865, 940, 947, and 950 each coordinate Zn(2+). A disordered region spans residues 1475-1499; sequence YEPSQRAYQEDEYAKKEDGEIAIDD. Residues 1482 to 1493 are compositionally biased toward basic and acidic residues; that stretch reads YQEDEYAKKEDG.

It belongs to the RNA polymerase beta' chain family. The RNAP catalytic core consists of 2 alpha, 1 beta, 1 beta' and 1 omega subunit. When a sigma factor is associated with the core the holoenzyme is formed, which can initiate transcription. The cofactor is Mg(2+). Zn(2+) serves as cofactor.

It catalyses the reaction RNA(n) + a ribonucleoside 5'-triphosphate = RNA(n+1) + diphosphate. Functionally, DNA-dependent RNA polymerase catalyzes the transcription of DNA into RNA using the four ribonucleoside triphosphates as substrates. The protein is DNA-directed RNA polymerase subunit beta' of Chloroherpeton thalassium (strain ATCC 35110 / GB-78).